The chain runs to 331 residues: PTS-dependent dihydroxyacetone kinase 2, dihydroxyacetone-binding subunit DhaK (331 aa).

In terms of domain architecture, DhaK spans 7–328 (DGYEAVEEML…LDTPCDTPYF (322 aa)). Dihydroxyacetone contacts are provided by residues 55–58 (GSGH) and aspartate 111. The Proton acceptor role is filled by histidine 58. Histidine 218 (tele-hemiaminal-histidine intermediate) is an active-site residue.

As to quaternary structure, homodimer. The dihydroxyacetone kinase complex is composed of a homodimer of DhaM, a homodimer of DhaK and the subunit DhaL.

It localises to the cytoplasm. It carries out the reaction dihydroxyacetone + phosphoenolpyruvate = dihydroxyacetone phosphate + pyruvate. It functions in the pathway polyol metabolism; glycerol degradation. In terms of biological role, dihydroxyacetone binding subunit of the dihydroxyacetone kinase, which is responsible for the phosphoenolpyruvate (PEP)-dependent phosphorylation of dihydroxyacetone via a phosphoryl group transfer from DhaL-ATP. The polypeptide is PTS-dependent dihydroxyacetone kinase 2, dihydroxyacetone-binding subunit DhaK (Listeria innocua serovar 6a (strain ATCC BAA-680 / CLIP 11262)).